We begin with the raw amino-acid sequence, 555 residues long: Glutamine--tRNA ligase (555 aa).

The short motif at 35–45 (PEPNGYLHIGH) is the 'HIGH' region element. Residues 36 to 38 (EPN) and 42 to 48 (HIGHAKS) each bind ATP. Asp68 and Tyr213 together coordinate L-glutamine. Residues Thr232 and 262–263 (RL) each bind ATP. The 'KMSKS' region motif lies at 269–273 (ITSKR).

This sequence belongs to the class-I aminoacyl-tRNA synthetase family. As to quaternary structure, monomer.

The protein resides in the cytoplasm. It catalyses the reaction tRNA(Gln) + L-glutamine + ATP = L-glutaminyl-tRNA(Gln) + AMP + diphosphate. The protein is Glutamine--tRNA ligase of Ectopseudomonas mendocina (strain ymp) (Pseudomonas mendocina).